A 327-amino-acid polypeptide reads, in one-letter code: Lipoyl synthase (327 aa).

Residues cysteine 66, cysteine 71, cysteine 77, cysteine 92, cysteine 96, cysteine 99, and serine 306 each coordinate [4Fe-4S] cluster. In terms of domain architecture, Radical SAM core spans 78 to 295; the sequence is FSKGTATFMI…EKEAYELGFS (218 aa).

It belongs to the radical SAM superfamily. Lipoyl synthase family. Requires [4Fe-4S] cluster as cofactor.

It localises to the cytoplasm. The catalysed reaction is [[Fe-S] cluster scaffold protein carrying a second [4Fe-4S](2+) cluster] + N(6)-octanoyl-L-lysyl-[protein] + 2 oxidized [2Fe-2S]-[ferredoxin] + 2 S-adenosyl-L-methionine + 4 H(+) = [[Fe-S] cluster scaffold protein] + N(6)-[(R)-dihydrolipoyl]-L-lysyl-[protein] + 4 Fe(3+) + 2 hydrogen sulfide + 2 5'-deoxyadenosine + 2 L-methionine + 2 reduced [2Fe-2S]-[ferredoxin]. It functions in the pathway protein modification; protein lipoylation via endogenous pathway; protein N(6)-(lipoyl)lysine from octanoyl-[acyl-carrier-protein]: step 2/2. In terms of biological role, catalyzes the radical-mediated insertion of two sulfur atoms into the C-6 and C-8 positions of the octanoyl moiety bound to the lipoyl domains of lipoate-dependent enzymes, thereby converting the octanoylated domains into lipoylated derivatives. This chain is Lipoyl synthase, found in Neisseria meningitidis serogroup B (strain ATCC BAA-335 / MC58).